The primary structure comprises 265 residues: Orotidine 5'-phosphate decarboxylase (265 aa).

Substrate contacts are provided by residues aspartate 37, 59 to 61 (KTH), 91 to 100 (DRKFADIGNT), tyrosine 217, and arginine 235. The active-site Proton donor is the lysine 93.

It belongs to the OMP decarboxylase family.

It catalyses the reaction orotidine 5'-phosphate + H(+) = UMP + CO2. Its pathway is pyrimidine metabolism; UMP biosynthesis via de novo pathway; UMP from orotate: step 2/2. The sequence is that of Orotidine 5'-phosphate decarboxylase (URA3) from Diutina rugosa (Yeast).